The sequence spans 705 residues: Ribosomal RNA large subunit methyltransferase K/L (705 aa).

Positions 43 to 154 constitute a THUMP domain; sequence VVYRCCLWSR…GEKGILGFDL (112 aa).

This sequence belongs to the methyltransferase superfamily. RlmKL family.

Its subcellular location is the cytoplasm. It catalyses the reaction guanosine(2445) in 23S rRNA + S-adenosyl-L-methionine = N(2)-methylguanosine(2445) in 23S rRNA + S-adenosyl-L-homocysteine + H(+). It carries out the reaction guanosine(2069) in 23S rRNA + S-adenosyl-L-methionine = N(2)-methylguanosine(2069) in 23S rRNA + S-adenosyl-L-homocysteine + H(+). Functionally, specifically methylates the guanine in position 2445 (m2G2445) and the guanine in position 2069 (m7G2069) of 23S rRNA. The polypeptide is Ribosomal RNA large subunit methyltransferase K/L (Aliivibrio fischeri (strain MJ11) (Vibrio fischeri)).